The chain runs to 108 residues: UPF0060 membrane protein CC_1976 (108 aa).

4 helical membrane-spanning segments follow: residues 4 to 24 (FAIY…FWAW), 27 to 47 (LGKS…FALL), 59 to 79 (AFAA…QVVE), and 85 to 105 (RWDL…LFGP).

This sequence belongs to the UPF0060 family.

Its subcellular location is the cell inner membrane. The protein is UPF0060 membrane protein CC_1976 of Caulobacter vibrioides (strain ATCC 19089 / CIP 103742 / CB 15) (Caulobacter crescentus).